Reading from the N-terminus, the 299-residue chain is Coenzyme PQQ synthesis protein B (299 aa).

This sequence belongs to the PqqB family.

It participates in cofactor biosynthesis; pyrroloquinoline quinone biosynthesis. In terms of biological role, may be involved in the transport of PQQ or its precursor to the periplasm. In Methylobacterium sp. (strain 4-46), this protein is Coenzyme PQQ synthesis protein B.